Here is a 195-residue protein sequence, read N- to C-terminus: Imidazoleglycerol-phosphate dehydratase (195 aa).

This sequence belongs to the imidazoleglycerol-phosphate dehydratase family.

Its subcellular location is the cytoplasm. It catalyses the reaction D-erythro-1-(imidazol-4-yl)glycerol 3-phosphate = 3-(imidazol-4-yl)-2-oxopropyl phosphate + H2O. It functions in the pathway amino-acid biosynthesis; L-histidine biosynthesis; L-histidine from 5-phospho-alpha-D-ribose 1-diphosphate: step 6/9. The protein is Imidazoleglycerol-phosphate dehydratase of Thiobacillus denitrificans (strain ATCC 25259 / T1).